Here is a 238-residue protein sequence, read N- to C-terminus: CFA/I fimbrial subunit A (238 aa).

The first 19 residues, 1–19 (MHKLFYLLSLLMAPFVANA), serve as a signal peptide directing secretion.

It localises to the fimbrium. In terms of biological role, might function as a shuttle protein in the transport of fimbria through the periplasmic space or might function as an adhesin. The sequence is that of CFA/I fimbrial subunit A (cfaA) from Escherichia coli.